We begin with the raw amino-acid sequence, 184 residues long: ATP synthase subunit b, chloroplastic (184 aa).

A helical membrane pass occupies residues 27–49 (LATNPINLSVVLGVLIFFGKGVL).

It belongs to the ATPase B chain family. In terms of assembly, F-type ATPases have 2 components, F(1) - the catalytic core - and F(0) - the membrane proton channel. F(1) has five subunits: alpha(3), beta(3), gamma(1), delta(1), epsilon(1). F(0) has four main subunits: a(1), b(1), b'(1) and c(10-14). The alpha and beta chains form an alternating ring which encloses part of the gamma chain. F(1) is attached to F(0) by a central stalk formed by the gamma and epsilon chains, while a peripheral stalk is formed by the delta, b and b' chains.

The protein localises to the plastid. The protein resides in the chloroplast thylakoid membrane. Its function is as follows. F(1)F(0) ATP synthase produces ATP from ADP in the presence of a proton or sodium gradient. F-type ATPases consist of two structural domains, F(1) containing the extramembraneous catalytic core and F(0) containing the membrane proton channel, linked together by a central stalk and a peripheral stalk. During catalysis, ATP synthesis in the catalytic domain of F(1) is coupled via a rotary mechanism of the central stalk subunits to proton translocation. In terms of biological role, component of the F(0) channel, it forms part of the peripheral stalk, linking F(1) to F(0). The chain is ATP synthase subunit b, chloroplastic from Ceratophyllum demersum (Rigid hornwort).